The sequence spans 139 residues: Chemical-damaging agent resistance protein B (139 aa).

This sequence belongs to the CAPAB/TerDEXZ family.

Functionally, not known; could confer methyl methane sulfonate (MMS), mitomycin C (MC), and UV resistance. The protein is Chemical-damaging agent resistance protein B of Clostridium acetobutylicum.